The following is a 264-amino-acid chain: Secretory carrier-associated membrane protein 4 (264 aa).

The disordered stretch occupies residues 1–33; that stretch reads MNRHHDPNPFDEDEEIVNPFSKGGGRVPAASRP. The Cytoplasmic portion of the chain corresponds to 1–122; it reads MNRHHDPNPF…AQKLQYLAFA (122 aa). Positions 51-85 form a coiled coil; sequence MNDSSQKQRKLADWEAELRKKEMDIKRREEAIAKF. 4 consecutive transmembrane segments (helical) span residues 123-143, 150-170, 185-205, and 233-253; these read SWLGIVLCLVFNVIATMVCWI, IFFLATIYALIGCPLSYVLWY, FGWFFFTYLIHIGFCIVAAIA, and IFYFIGFGLFCLESLLSLWVL. Residues 254-264 lie on the Cytoplasmic side of the membrane; that stretch reads QKIYLYFRGNK.

This sequence belongs to the SCAMP family.

It localises to the cell membrane. The protein localises to the cytoplasmic vesicle. The protein resides in the secretory vesicle membrane. Its function is as follows. Probably involved in membrane trafficking. The polypeptide is Secretory carrier-associated membrane protein 4 (SCAMP4) (Arabidopsis thaliana (Mouse-ear cress)).